Reading from the N-terminus, the 500-residue chain is MALRVTADVWLARPWQCLHRTRALGTTATLAPKTLKPFEAIPQYSRNKWLKMIQILREQGQENLHLEMHQAFQELGPIFRHSAGGAQIVSVMLPEDAEKLHQVESILPRRMHLEPWVAHRELRGLRRGVFLLNGAEWRFNRLKLNPNVLSPKAVQNFVPMVDEVARDFLEALKKKVRQNARGSLTMDVQQSLFNYTIEASNFALFGERLGLLGHDLNPGSLKFIHALHSMFKSTTQLLFLPRSLTRWTSTQVWKEHFDAWDVISEYANRCIWKVHQELRLGSSQTYSGIVAALITQGALPLDAIKANSMKLTAGSVDTTAIPLVMTLFELARNPDVQQALRQETLAAEASIAANPQKAMSDLPLLRAALKETLRLYPVGGFLERILNSDLVLQNYHVPAGTLVLLYLYSMGRNPAVFPRPERYMPQRWLERKRSFQHLAFGFGVRQCLGRRLAEVEMLLLLHHMLKTFQVETLRQEDVQMAYRFVLMPSSSPVLTFRPIS.

A mitochondrion-targeting transit peptide spans 1–24 (MALRVTADVWLARPWQCLHRTRAL). Cys447 provides a ligand contact to heme.

The protein belongs to the cytochrome P450 family. Heme is required as a cofactor. Expressed in the adrenal cortex and in different brain tissues, including hippocampus, hypothalamus, cerebellum, cerebral cortex, and midbrain.

The protein resides in the mitochondrion membrane. The catalysed reaction is a steroid + 2 reduced [adrenodoxin] + O2 + 2 H(+) = an 11beta-hydroxysteroid + 2 oxidized [adrenodoxin] + H2O. The enzyme catalyses 21-hydroxyprogesterone + 2 reduced [adrenodoxin] + O2 + 2 H(+) = corticosterone + 2 oxidized [adrenodoxin] + H2O. It catalyses the reaction 21-hydroxyprogesterone + 2 reduced [adrenodoxin] + O2 + 2 H(+) = 18-hydroxy-11-deoxycorticosterone + 2 oxidized [adrenodoxin] + H2O. It carries out the reaction 21-hydroxyprogesterone + 2 reduced [adrenodoxin] + O2 + 2 H(+) = 19-hydroxy-11-deoxycorticosterone + 2 oxidized [adrenodoxin] + H2O. Its function is as follows. A cytochrome P450 monooxygenase involved in the biosynthesis of adrenal corticoids. Catalyzes the hydroxylation of steroids at 11beta, 18- or 19-positions, with preferred regioselectivity at 11beta and 18. Converts 11-deoxycorticosterone into corticosterone, 18-hydroxy-11-deoxycorticosterone, and/or 19-hydroxy-11-deoxycorticosterone, but not to 18-hydroxycorticosterone or aldosterone. Mechanistically, uses molecular oxygen inserting one oxygen atom into a substrate for hydroxylation and reducing the second into a water molecule. Two electrons are provided by NADPH via a two-protein mitochondrial transfer system comprising flavoprotein FDXR (adrenodoxin/ferredoxin reductase) and nonheme iron-sulfur protein FDX1 or FDX2 (adrenodoxin/ferredoxin). This is Cytochrome P450 11B3, mitochondrial (Cyp11b3) from Rattus norvegicus (Rat).